The sequence spans 691 residues: Elongation factor G (691 aa).

In terms of domain architecture, tr-type G spans 8-283 (KKVRNIGIAA…AVVAYLPAPD (276 aa)). Residues 17 to 24 (AHIDAGKT), 81 to 85 (DTPGH), and 135 to 138 (NKMD) contribute to the GTP site.

This sequence belongs to the TRAFAC class translation factor GTPase superfamily. Classic translation factor GTPase family. EF-G/EF-2 subfamily.

It localises to the cytoplasm. Its function is as follows. Catalyzes the GTP-dependent ribosomal translocation step during translation elongation. During this step, the ribosome changes from the pre-translocational (PRE) to the post-translocational (POST) state as the newly formed A-site-bound peptidyl-tRNA and P-site-bound deacylated tRNA move to the P and E sites, respectively. Catalyzes the coordinated movement of the two tRNA molecules, the mRNA and conformational changes in the ribosome. The sequence is that of Elongation factor G from Campylobacter jejuni subsp. jejuni serotype O:23/36 (strain 81-176).